A 3032-amino-acid chain; its full sequence is DmX-like protein 2 (3032 aa).

3 WD repeats span residues 108–145 (FLSS…ILEE), 167–207 (KTSV…KSSI), and 230–278 (AHPR…EDCL). Position 326 is a phosphoserine (Ser326). The disordered stretch occupies residues 418–486 (QLDHESDDAD…HPRPSISMPL (69 aa)). The segment covering 422 to 434 (ESDDADREDEERS) has biased composition (acidic residues). The span at 435–474 (QDERERGLRMKLDHELSLDRESEAGTGSSEHEDGEREGSP) shows a compositional bias: basic and acidic residues. Ser473 bears the Phosphoserine mark. One copy of the WD 4 repeat lies at 492-532 (DRKIETLLTEWNKNPDMLFTIHPVDGTFLVWHVKYLDEYNP). Residues 577–598 (PSQQEMMSVDSPHGSQLHSPSH) form a disordered region. Ser587 carries the phosphoserine modification. Over residues 589–598 (HGSQLHSPSH) the composition is skewed to polar residues. WD repeat units follow at residues 594–633 (HSPS…KSAF), 750–802 (LHTS…RKLL), and 879–921 (QPSQ…VQAC). Residues 937–958 (VPGQKNLDSSPETSSSMSSVPH) form a disordered region. 2 positions are modified to phosphoserine: Ser945 and Ser946. The segment covering 945–958 (SSPETSSSMSSVPH) has biased composition (low complexity). A WD 8 repeat occupies 1001 to 1038 (LSSSSIYPVCLAPYLVVTTCSDNKVRFWKCCMETNSLG). Residues Ser1141, Ser1144, and Ser1152 each carry the phosphoserine modification. WD repeat units follow at residues 1164-1205 (PNIK…VSDQ) and 1245-1285 (GTPS…GNVD). Residues Ser1288 and Ser1399 each carry the phosphoserine modification. Thr1416 is subject to Phosphothreonine. A disordered region spans residues 1443–1464 (RISEDSTKKPQSYEDHIESQSE). Positions 1444-1461 (ISEDSTKKPQSYEDHIES) are enriched in basic and acidic residues. At Ser1856 the chain carries Phosphoserine. The interval 1922–1953 (QLDSVSGRMENGPSESKPVSRSDGGSGADWSA) is disordered. Thr2017 carries the phosphothreonine modification. The stretch at 2117–2146 (GSYERHQIERRRLQAKREHAERRKLWLQKN) forms a coiled coil. Residues Ser2394 and Ser2636 each carry the phosphoserine modification. Positions 2722–2732 (QPGAASHSSSQ) are enriched in low complexity. The interval 2722–2744 (QPGAASHSSSQPHPPPSLPWLGS) is disordered. WD repeat units lie at residues 2757 to 2796 (RNLH…QLVC), 2800 to 2839 (AGNA…SNPK), 2846 to 2888 (CHSK…GNSL), 2894 to 2933 (CHDH…LIHT), 2936 to 2975 (AHDS…LIHS), and 2988 to 3026 (NIGA…NIPN).

As to quaternary structure, interacts with MADD and RAB3GAP. Expressed in the brain and pituitary gland. Detected in the hippocampus, dentate gyrus, hypothalamus, pyriform cortex and the granular and molecular layers of the cerebellum of adult animals. In the hypothalamus, expression is observed in the arcuate nucleus, the ME, the organum vasculosum of the lamina terminalis, and the subfornical organ, the subcommissural organ, and the suprachiasmatic nucleus. Both tanycytes and hypothalamic neurosecretory neurons express the protein. Expressed in the inner and outer hair cells as well as in the spiral ganglion neurons. Expressed in insulin-secreting cells of the islets of Langerhans in the pancreas.

It localises to the cytoplasmic vesicle. The protein localises to the secretory vesicle. Its subcellular location is the synaptic vesicle membrane. It is found in the neuronal dense core vesicle. Its function is as follows. May serve as a scaffold protein for MADD and RAB3GA on synaptic vesicles of neuronal and endocrine homeostatic processes. Plays a role in the brain as a key controller of neuronal and endocrine homeostatic processes. The protein is DmX-like protein 2 (Dmxl2) of Mus musculus (Mouse).